We begin with the raw amino-acid sequence, 353 residues long: uncharacterized protein (353 aa).

The first 20 residues, 1-20 (MLMRSVCFILLAVLLFSLSA), serve as a signal peptide directing secretion. The N-palmitoyl cysteine moiety is linked to residue cysteine 21. Cysteine 21 carries the S-diacylglycerol cysteine lipid modification.

The protein localises to the cell membrane. This is an uncharacterized protein from Bacillus subtilis (strain 168).